A 115-amino-acid chain; its full sequence is Large ribosomal subunit protein bL19 (115 aa).

This sequence belongs to the bacterial ribosomal protein bL19 family.

This protein is located at the 30S-50S ribosomal subunit interface and may play a role in the structure and function of the aminoacyl-tRNA binding site. This chain is Large ribosomal subunit protein bL19, found in Klebsiella pneumoniae (strain 342).